A 216-amino-acid polypeptide reads, in one-letter code: Large ribosomal subunit protein uL3 (216 aa).

The segment at 137–158 is disordered; the sequence is GASHGAHKNHRKPGSIGGASTP.

This sequence belongs to the universal ribosomal protein uL3 family. In terms of assembly, part of the 50S ribosomal subunit. Forms a cluster with proteins L14 and L19.

In terms of biological role, one of the primary rRNA binding proteins, it binds directly near the 3'-end of the 23S rRNA, where it nucleates assembly of the 50S subunit. The polypeptide is Large ribosomal subunit protein uL3 (Pseudarthrobacter chlorophenolicus (strain ATCC 700700 / DSM 12829 / CIP 107037 / JCM 12360 / KCTC 9906 / NCIMB 13794 / A6) (Arthrobacter chlorophenolicus)).